The chain runs to 363 residues: UDP-N-acetylenolpyruvoylglucosamine reductase (363 aa).

In terms of domain architecture, FAD-binding PCMH-type spans 27 to 197 (LGGWATRVVT…LSVDFRLARS (171 aa)). R175 is an active-site residue. Catalysis depends on S252, which acts as the Proton donor. The active site involves E355.

The protein belongs to the MurB family. It depends on FAD as a cofactor.

The protein resides in the cytoplasm. The catalysed reaction is UDP-N-acetyl-alpha-D-muramate + NADP(+) = UDP-N-acetyl-3-O-(1-carboxyvinyl)-alpha-D-glucosamine + NADPH + H(+). Its pathway is cell wall biogenesis; peptidoglycan biosynthesis. Its function is as follows. Cell wall formation. The protein is UDP-N-acetylenolpyruvoylglucosamine reductase of Salinispora arenicola (strain CNS-205).